The chain runs to 639 residues: Probable serine/threonine-protein kinase DDB_G0282777 (639 aa).

Residues 7–122 (LKENKESLKD…EDLKSIILTS (116 aa)) adopt a coiled-coil conformation. Residues 233–588 (MHMVGDIKKG…SNNNQNHTNI (356 aa)) enclose the Protein kinase domain. ATP is bound by residues 239–247 (IKKGSISSD) and Lys-284. Asp-439 (proton acceptor) is an active-site residue. A disordered region spans residues 601–639 (NTLETSTTNPNTNTTTSDTNTSTTSTTNTNTTTSNTITA).

It belongs to the protein kinase superfamily. Ser/Thr protein kinase family.

It catalyses the reaction L-seryl-[protein] + ATP = O-phospho-L-seryl-[protein] + ADP + H(+). It carries out the reaction L-threonyl-[protein] + ATP = O-phospho-L-threonyl-[protein] + ADP + H(+). This chain is Probable serine/threonine-protein kinase DDB_G0282777, found in Dictyostelium discoideum (Social amoeba).